Consider the following 221-residue polypeptide: 7-cyano-7-deazaguanine synthase (221 aa).

10 to 20 (FSGGQDSTTCL) contacts ATP. Cys-186, Cys-195, Cys-198, and Cys-201 together coordinate Zn(2+).

The protein belongs to the QueC family. Homodimer. The cofactor is Zn(2+).

It catalyses the reaction 7-carboxy-7-deazaguanine + NH4(+) + ATP = 7-cyano-7-deazaguanine + ADP + phosphate + H2O + H(+). Its pathway is purine metabolism; 7-cyano-7-deazaguanine biosynthesis. Catalyzes the ATP-dependent conversion of 7-carboxy-7-deazaguanine (CDG) to 7-cyano-7-deazaguanine (preQ(0)). This chain is 7-cyano-7-deazaguanine synthase, found in Anoxybacillus flavithermus (strain DSM 21510 / WK1).